A 393-amino-acid polypeptide reads, in one-letter code: G protein-activated inward rectifier potassium channel 3 (393 aa).

Residues 1–23 form a disordered region; the sequence is MAQENAAFSPGSEEPPRRRGRQR. Residues 1 to 57 are Cytoplasmic-facing; that stretch reads MAQENAAFSPGSEEPPRRRGRQRYVEKDGRCNVQQGNVRETYRYLTDLFTTLVDLQW. Residues 58–82 traverse the membrane as a helical segment; it reads RLSLLFFVLAYALTWLFFGAIWWLI. Residues 83–106 lie on the Extracellular side of the membrane; that stretch reads AYGRGDLEHLEDTAWTPCVNNLNG. Residues 107–118 constitute an intramembrane region (helical; Pore-forming); sequence FVAAFLFSIETE. The pore-forming intramembrane region spans 119–125; sequence TTIGYGH. Residues 120–125 carry the Selectivity filter motif; that stretch reads TIGYGH. Topologically, residues 126–134 are extracellular; sequence RVITDQCPE. Residues 135-156 traverse the membrane as a helical segment; sequence GIVLLLLQAILGSMVNAFMVGC. The Cytoplasmic segment spans residues 157–393; sequence MFVKISQPNK…LPPPESESKV (237 aa). A disordered region spans residues 360–393; it reads KVEEEGAGEGAGAGDGADKEHNGCLPPPESESKV. Pro residues predominate over residues 384-393; sequence LPPPESESKV. Positions 390-393 match the PDZ-binding motif; that stretch reads ESKV.

The protein belongs to the inward rectifier-type potassium channel (TC 1.A.2.1) family. KCNJ9 subfamily. As to quaternary structure, associates with KCNJ3/GIRK1 to form a G-protein-activated heteromultimer pore-forming unit. Interacts (via PDZ-binding motif) with SNX27 (via PDZ domain); the interaction is required when endocytosed to prevent degradation in lysosomes and promote recycling to the plasma membrane. Expressed mainly in the brain, some expression in the skeletal muscle.

It is found in the membrane. The enzyme catalyses K(+)(in) = K(+)(out). In terms of biological role, inward rectifier potassium channels are characterized by a greater tendency to allow potassium to flow into the cell rather than out of it. Their voltage dependence is regulated by the concentration of extracellular potassium; as external potassium is raised, the voltage range of the channel opening shifts to more positive voltages. The inward rectification is mainly due to the blockage of outward current by internal magnesium. This receptor is controlled by G proteins. Unable to produce channel activity when expressed alone. Forms a functional channel in association with KCNJ3/GIRK1. The protein is G protein-activated inward rectifier potassium channel 3 (Kcnj9) of Mus musculus (Mouse).